A 783-amino-acid chain; its full sequence is Serine/threonine-protein kinase SIK1 (783 aa).

The Protein kinase domain maps to 27–278; the sequence is YDIERTLGKG…IAQIRQHRWM (252 aa). ATP-binding positions include 33–41 and K56; that span reads LGKGNFAVV. The active-site Proton acceptor is D149. Position 182 is a phosphothreonine; by LKB1 and GSK3-beta (T182). S186 carries the post-translational modification Phosphoserine; by autocatalysis. Residues 303-343 enclose the UBA domain; that stretch reads DYDEQALGIMQTLGVDRQRTVESLQNSSYNHFAAIYYLLLE. The residue at position 322 (T322) is a Phosphothreonine; by CaMK1. Disordered regions lie at residues 353 to 377 and 449 to 477; these read CARP…VPQE and RQGP…LAEV. Residue T473 is modified to Phosphothreonine; by PKA. Residue S575 is modified to Phosphoserine; by PKA. An RK-rich region; required for cAMP responsiveness and nuclear localization region spans residues 583-612; that stretch reads LKAFRQQLRKTTRTKGFLGLNKIKGLARQV. The segment at 619–643 is disordered; the sequence is RASRGGLSPFHAPAQSPGLHGGAAG.

The protein belongs to the protein kinase superfamily. CAMK Ser/Thr protein kinase family. AMPK subfamily. In terms of assembly, interacts with ATP1A1. Interacts (when phosphorylated on Thr-182 and Ser-186) with YWHAZ. Interacts (when phosphorylated at Thr-473 and/or Ser-575) with 14-3-3 proteins; the interaction inhibits kinase activity towards TORCs. There is a cooperative effect of the phosphorylation sites in 14-3-3 binding as the interaction is stronger when both Thr-473 and Ser-575 are modified. It depends on Mg(2+) as a cofactor. Phosphorylated at Thr-182 by STK11/LKB1 in complex with STE20-related adapter-alpha (STRADA) pseudo kinase and CAB39, leading to its activation. Phosphorylation at Thr-182 promotes autophosphorylation at Ser-186, which is required for sustained activity. Autophosphorylation at Ser-186 is maintained by sequential phosphorylation at Thr-182 by GSK3-beta. GSK3-beta cannot initiate phosphorylation at Thr-182, it can only maintain it. Phosphorylation at Ser-575 in response to cAMP signaling promotes translocation to the cytoplasm. Phosphorylation at Thr-322 by CaMK1 following intracellular sodium concentration leads to activation.

It localises to the cytoplasm. The protein localises to the nucleus. The enzyme catalyses L-seryl-[protein] + ATP = O-phospho-L-seryl-[protein] + ADP + H(+). It catalyses the reaction L-threonyl-[protein] + ATP = O-phospho-L-threonyl-[protein] + ADP + H(+). Activated by phosphorylation on Thr-182. Also activated by phosphorylation on Thr-322 in response to increases in intracellular sodium in parallel with elevations in intracellular calcium through the reversible sodium/calcium exchanger. Inhibited by phosphorylation at Thr-473 and Ser-575, probably by PKA, which triggers interaction with 14-3-3 proteins. In terms of biological role, serine/threonine-protein kinase involved in various processes such as cell cycle regulation, gluconeogenesis and lipogenesis regulation, muscle growth and differentiation and tumor suppression. Phosphorylates HDAC4, HDAC5, PPME1, SREBF1, CRTC1/TORC1. Inhibits CREB activity by phosphorylating and inhibiting activity of TORCs, the CREB-specific coactivators, like CRTC2/TORC2 and CRTC3/TORC3 in response to cAMP signaling. Acts as a tumor suppressor and plays a key role in p53/TP53-dependent anoikis, a type of apoptosis triggered by cell detachment: required for phosphorylation of p53/TP53 in response to loss of adhesion and is able to suppress metastasis. Part of a sodium-sensing signaling network, probably by mediating phosphorylation of PPME1: following increases in intracellular sodium, SIK1 is activated by CaMK1 and phosphorylates PPME1 subunit of protein phosphatase 2A (PP2A), leading to dephosphorylation of sodium/potassium-transporting ATPase ATP1A1 and subsequent increase activity of ATP1A1. Acts as a regulator of muscle cells by phosphorylating and inhibiting class II histone deacetylases HDAC4 and HDAC5, leading to promote expression of MEF2 target genes in myocytes. Also required during cardiomyogenesis by regulating the exit of cardiomyoblasts from the cell cycle via down-regulation of CDKN1C/p57Kip2. Acts as a regulator of hepatic gluconeogenesis by phosphorylating and repressing the CREB-specific coactivators CRTC1/TORC1 and CRTC2/TORC2, leading to inhibit CREB activity. Also regulates hepatic lipogenesis by phosphorylating and inhibiting SREBF1. In concert with CRTC1/TORC1, regulates the light-induced entrainment of the circadian clock by attenuating PER1 induction; represses CREB-mediated transcription of PER1 by phosphorylating and deactivating CRTC1/TORC1. This Homo sapiens (Human) protein is Serine/threonine-protein kinase SIK1 (SIK1).